We begin with the raw amino-acid sequence, 698 residues long: Polyribonucleotide nucleotidyltransferase (698 aa).

Mg(2+) contacts are provided by Asp-485 and Asp-491. Residues Pro-552–Ile-611 enclose the KH domain. In terms of domain architecture, S1 motif spans Gly-621–Lys-689.

It belongs to the polyribonucleotide nucleotidyltransferase family. In terms of assembly, component of the RNA degradosome, which is a multiprotein complex involved in RNA processing and mRNA degradation. Mg(2+) is required as a cofactor.

It is found in the cytoplasm. The catalysed reaction is RNA(n+1) + phosphate = RNA(n) + a ribonucleoside 5'-diphosphate. Involved in mRNA degradation. Catalyzes the phosphorolysis of single-stranded polyribonucleotides processively in the 3'- to 5'-direction. The sequence is that of Polyribonucleotide nucleotidyltransferase from Psychromonas ingrahamii (strain DSM 17664 / CCUG 51855 / 37).